We begin with the raw amino-acid sequence, 457 residues long: Cysteine--tRNA ligase (457 aa).

Cysteine 28 contributes to the Zn(2+) binding site. The 'HIGH' region motif lies at 30-40 (ITVYDLCHIGH). Residues cysteine 209, histidine 234, and glutamate 238 each coordinate Zn(2+). The 'KMSKS' region motif lies at 266–270 (KMSKS). Lysine 269 contacts ATP.

It belongs to the class-I aminoacyl-tRNA synthetase family. In terms of assembly, monomer. It depends on Zn(2+) as a cofactor.

The protein localises to the cytoplasm. It carries out the reaction tRNA(Cys) + L-cysteine + ATP = L-cysteinyl-tRNA(Cys) + AMP + diphosphate. The protein is Cysteine--tRNA ligase of Sodalis glossinidius (strain morsitans).